Here is a 238-residue protein sequence, read N- to C-terminus: Testis-specific gene A8 protein (238 aa).

A disordered region spans residues 35-238 (GKGAKTNKRG…GEAVATTTMT (204 aa)). Residues 39–48 (KTNKRGKRGG) are compositionally biased toward basic residues. 8 consecutive repeat copies span residues 79-93 (AAAA…PESS), 94-108 (AAAA…PESS), 109-123 (AAAA…PESS), 124-138 (AAAA…LESS), 153-158 (PAAPEA), 171-176 (PAAPEA), 180-185 (PAAPEA), and 189-194 (PAAPEA). Residues 79-148 (AAAAAPEAAA…AAAAAPEAAA (70 aa)) form a 4 X 15 AA tandem repeats of A-A-A-A-A-P-E-A-A-A-S-[PL]-E-S-S region. Low complexity-rich tracts occupy residues 79–200 (AAAA…AAPA) and 208–220 (WEAA…AAVK). The interval 153-194 (PAAPEAAAAPEVAAAPATPAAPEATAAPAAPEAATTPAAPEA) is 4 X 6 AA repeats of P-A-A-P-E-A.

As to expression, specifically expressed in testis (at protein level).

It localises to the cytoplasm. The protein resides in the nucleus. Its subcellular location is the nucleoplasm. The protein is Testis-specific gene A8 protein of Mus musculus (Mouse).